The chain runs to 335 residues: MKKWLPAFLFLSLSGCNDALAANQSTMFYSFNDNIYRPQLSVKVTDIVQFIVDINSASSTATLSYVACNGFTWTHGLYWSEYFAWLVVPKHVSYNGYNIYLELQSRGSFSLDAEDNDNYYLTKGFAWDEANTSGQTCFNIGEKRSLAWSFGGVTLNARLPVDLPKGDYTFPVKFLRGIQRNNYDYIGGRYKIPSSLMKTFPFNGTLNFSIKNTGGCRPSAQSLEINHGDLSINSANNHYAAQTLSVSCDVPTNIRFFLLSNTNPAYSHGQQFSVGLGHGWDSIISINGVDTGETTMRWYRAGTQNLTTGSRLYGESSKIQPGVLSGSATLLMILP.

The N-terminal stretch at 1–21 (MKKWLPAFLFLSLSGCNDALA) is a signal peptide.

It belongs to the adhesin PapG family.

Its subcellular location is the secreted. It is found in the fimbrium. Tip adhesin component of type P pili that binds preferentially to Gal-alpha(1-4)-Gal-containing glycolipids such as globoside. This tip is common in E.coli strains that cause human cystitis, but rare in pyelonephritic isolates. The sequence is that of Fimbrial adhesin PapGIII from Escherichia coli.